The primary structure comprises 296 residues: Phosphoribosylaminoimidazole-succinocarboxamide synthase (296 aa).

It belongs to the SAICAR synthetase family.

It catalyses the reaction 5-amino-1-(5-phospho-D-ribosyl)imidazole-4-carboxylate + L-aspartate + ATP = (2S)-2-[5-amino-1-(5-phospho-beta-D-ribosyl)imidazole-4-carboxamido]succinate + ADP + phosphate + 2 H(+). The protein operates within purine metabolism; IMP biosynthesis via de novo pathway; 5-amino-1-(5-phospho-D-ribosyl)imidazole-4-carboxamide from 5-amino-1-(5-phospho-D-ribosyl)imidazole-4-carboxylate: step 1/2. This Trichlorobacter lovleyi (strain ATCC BAA-1151 / DSM 17278 / SZ) (Geobacter lovleyi) protein is Phosphoribosylaminoimidazole-succinocarboxamide synthase.